Consider the following 338-residue polypeptide: Transferrin receptor subunit ESAG7 (338 aa).

The first 17 residues, Met1–Ala17, serve as a signal peptide directing secretion. Residues Asn26 and Asn110 are each glycosylated (N-linked (GlcNAc...) asparagine). 4 cysteine pairs are disulfide-bonded: Cys34/Cys161, Cys84/Cys311, Cys144/Cys215, and Cys230/Cys247. N-linked (GlcNAc...) asparagine glycosylation occurs at Asn234.

Heterodimer composed of ESAG6 and ESAG7. In terms of processing, N-glycosylated. Glycosylation is dispensable for heterodimer formation and host transferrin binding.

It is found in the cell membrane. It localises to the flagellar pocket. Transferrin receptor subunit involved in receptor-mediated acquisition of iron from the environment by binding host TF/transferrin. The chain is Transferrin receptor subunit ESAG7 from Trypanosoma brucei brucei.